The following is a 150-amino-acid chain: Small ribosomal subunit protein eS6 (150 aa).

It belongs to the eukaryotic ribosomal protein eS6 family.

The chain is Small ribosomal subunit protein eS6 from Caldivirga maquilingensis (strain ATCC 700844 / DSM 13496 / JCM 10307 / IC-167).